A 529-amino-acid polypeptide reads, in one-letter code: Bifunctional purine biosynthesis protein PurH (529 aa).

The MGS-like domain maps to 1 to 148 (MQQRRPVRRA…KNHKDVAIVV (148 aa)).

It belongs to the PurH family.

The catalysed reaction is (6R)-10-formyltetrahydrofolate + 5-amino-1-(5-phospho-beta-D-ribosyl)imidazole-4-carboxamide = 5-formamido-1-(5-phospho-D-ribosyl)imidazole-4-carboxamide + (6S)-5,6,7,8-tetrahydrofolate. It catalyses the reaction IMP + H2O = 5-formamido-1-(5-phospho-D-ribosyl)imidazole-4-carboxamide. Its pathway is purine metabolism; IMP biosynthesis via de novo pathway; 5-formamido-1-(5-phospho-D-ribosyl)imidazole-4-carboxamide from 5-amino-1-(5-phospho-D-ribosyl)imidazole-4-carboxamide (10-formyl THF route): step 1/1. It participates in purine metabolism; IMP biosynthesis via de novo pathway; IMP from 5-formamido-1-(5-phospho-D-ribosyl)imidazole-4-carboxamide: step 1/1. The polypeptide is Bifunctional purine biosynthesis protein PurH (Salmonella typhi).